Reading from the N-terminus, the 318-residue chain is MALDDIHTPVLLERCLELLAPALQGEGAVLVDATLGMAGHSEAFLDALPGLRLVGLDRDPDALAIAGERLARFGDRVNLVHTVYDGIGRALDGLGIGEVQGVFFDLGVSSLQLDRVERGFSYSQDAPLDMRMDGTAGLTAAQVVAEYDELELRRIFYDYGEEKLAPRYASRIVQAREVEPITTSARLVEIIQQATPAAVQRAGHPAKRVFQALRIEVNQELSVLARAMPAAVDRLAVGGRVVVESYQSLEDRIVKRELRARSTSTAPVGLPVELPEHRPELKLLVRGAELADQHEIAQNPRAASVRLRAAERARRRHA.

S-adenosyl-L-methionine contacts are provided by residues 38-40 (AGH), Asp-57, Leu-91, Asp-105, and Gln-112.

It belongs to the methyltransferase superfamily. RsmH family.

It localises to the cytoplasm. It carries out the reaction cytidine(1402) in 16S rRNA + S-adenosyl-L-methionine = N(4)-methylcytidine(1402) in 16S rRNA + S-adenosyl-L-homocysteine + H(+). Functionally, specifically methylates the N4 position of cytidine in position 1402 (C1402) of 16S rRNA. The chain is Ribosomal RNA small subunit methyltransferase H from Clavibacter michiganensis subsp. michiganensis (strain NCPPB 382).